Consider the following 21-residue polypeptide: Tertiapin (21 aa).

Disulfide bonds link cysteine 3–cysteine 14 and cysteine 5–cysteine 18.

In terms of processing, oxidation of Met-13 results in the loss of biological activity. Post-translationally, an amidation at Lys-21 is suggested in Ref.1. In terms of tissue distribution, expressed by the venom gland.

The protein localises to the secreted. Presynaptic neurotoxin that blocks the inwardly rectifying Kir1.1/KCNJ1 and Kir3.1/3.4 (KCNJ3/KCNJ5) potassium channels with high affinity by binding to the M1-M2 linker region of these channels in a 1:1 stoichiometry. It may block the potassium channel pore by occluding its alpha helix into the channel vestibule. Tertiapin-Q also inhibits calcium-activated large conductance BK-type (KCNMA) potassium channels in a concentration-, and voltage-dependent manner, in addition to inhibiting Kir3.1/3.2 (KCNJ3/KCNJ6) heteromultimers potassium channels. It can prevent dose-dependently acetylcholine(ACh)-induced atrioventricular blocks in mammalian hearts, as KCNJ3/KCNJ5 channels (also named I(KACh), because these channels are activated by ACh) are found in mammalian myocytes. Interacts specifically with calmodulin in the presence of calcium. This chain is Tertiapin, found in Apis mellifera (Honeybee).